The sequence spans 739 residues: Phosphoribosylformylglycinamidine synthase subunit PurL (739 aa).

Residue H55 is part of the active site. Residues Y58 and K97 each contribute to the ATP site. E99 is a Mg(2+) binding site. Substrate contacts are provided by residues 100–103 and R122; that span reads SHNH. H101 acts as the Proton acceptor in catalysis. Residue D123 participates in Mg(2+) binding. Q246 is a binding site for substrate. Residue D276 coordinates Mg(2+). 320–322 lines the substrate pocket; it reads ESQ. Residues D502 and G539 each contribute to the ATP site. Residue N540 participates in Mg(2+) binding. A substrate-binding site is contributed by S542.

Belongs to the FGAMS family. Monomer. Part of the FGAM synthase complex composed of 1 PurL, 1 PurQ and 2 PurS subunits.

The protein localises to the cytoplasm. The catalysed reaction is N(2)-formyl-N(1)-(5-phospho-beta-D-ribosyl)glycinamide + L-glutamine + ATP + H2O = 2-formamido-N(1)-(5-O-phospho-beta-D-ribosyl)acetamidine + L-glutamate + ADP + phosphate + H(+). It participates in purine metabolism; IMP biosynthesis via de novo pathway; 5-amino-1-(5-phospho-D-ribosyl)imidazole from N(2)-formyl-N(1)-(5-phospho-D-ribosyl)glycinamide: step 1/2. In terms of biological role, part of the phosphoribosylformylglycinamidine synthase complex involved in the purines biosynthetic pathway. Catalyzes the ATP-dependent conversion of formylglycinamide ribonucleotide (FGAR) and glutamine to yield formylglycinamidine ribonucleotide (FGAM) and glutamate. The FGAM synthase complex is composed of three subunits. PurQ produces an ammonia molecule by converting glutamine to glutamate. PurL transfers the ammonia molecule to FGAR to form FGAM in an ATP-dependent manner. PurS interacts with PurQ and PurL and is thought to assist in the transfer of the ammonia molecule from PurQ to PurL. This Lactiplantibacillus plantarum (strain ATCC BAA-793 / NCIMB 8826 / WCFS1) (Lactobacillus plantarum) protein is Phosphoribosylformylglycinamidine synthase subunit PurL.